The following is a 96-amino-acid chain: UPF0235 protein VV2877 (96 aa).

It belongs to the UPF0235 family.

This chain is UPF0235 protein VV2877, found in Vibrio vulnificus (strain YJ016).